The following is a 175-amino-acid chain: Adenine phosphoribosyltransferase (175 aa).

The protein belongs to the purine/pyrimidine phosphoribosyltransferase family. Homodimer.

Its subcellular location is the cytoplasm. It carries out the reaction AMP + diphosphate = 5-phospho-alpha-D-ribose 1-diphosphate + adenine. Its pathway is purine metabolism; AMP biosynthesis via salvage pathway; AMP from adenine: step 1/1. Its function is as follows. Catalyzes a salvage reaction resulting in the formation of AMP, that is energically less costly than de novo synthesis. This Synechococcus sp. (strain JA-2-3B'a(2-13)) (Cyanobacteria bacterium Yellowstone B-Prime) protein is Adenine phosphoribosyltransferase.